Reading from the N-terminus, the 131-residue chain is Small ribosomal subunit protein bS6 (131 aa).

The tract at residues 97 to 131 is disordered; sequence TEASPMAKARDERDSRRGPAGERSYDEAHAEEIAE. The span at 104–131 shows a compositional bias: basic and acidic residues; it reads KARDERDSRRGPAGERSYDEAHAEEIAE.

This sequence belongs to the bacterial ribosomal protein bS6 family.

Binds together with bS18 to 16S ribosomal RNA. The sequence is that of Small ribosomal subunit protein bS6 from Shewanella baltica (strain OS223).